The following is a 387-amino-acid chain: MNHGTKIPVDPFRIIKETARDGSTGEVKQLSYTSSKVVGSGSFGVVMQVHLIESDSKAAIKRVLQDKRFKNRELQIMRIMKHPNIVDLIAYYYTTGDNSDEVYLNLVLEFMPETIYRASRLYTRQKLSMPMLEVKLYIYQLLRSLAYIHASGICHRDIKPQNLLLDPENGILKLCDFGSAKILVAGEPNVSYICSRYYRAPELIFGATDYTHAIDIWSTGCVMAELMLGHPLFPGESGIDQLVEIIKILGTPSREQIKTMNPNYMEHRFPQIRPQPLSRVFSRSVPLDALDLLSKMLQYTPTDRLTAAEAMCHPFFDELRDPNTKLHNSRNPDASPRHLPELFNFSPFELSIRPDLNQKLIPSHARDALPVKLDDFVPIPIHRARID.

In terms of domain architecture, Protein kinase spans 32-316 (YTSSKVVGSG…AAEAMCHPFF (285 aa)). Residues 38 to 46 (VGSGSFGVV) and Lys61 contribute to the ATP site. The active-site Proton acceptor is the Asp157. Phosphoserine is present on Ser191. Position 192 is a phosphotyrosine; by autocatalysis (Tyr192). Ser335 carries the post-translational modification Phosphoserine.

This sequence belongs to the protein kinase superfamily. CMGC Ser/Thr protein kinase family. GSK-3 subfamily. In terms of processing, autophosphorylated on tyrosine residues.

It localises to the cytoplasm. The protein resides in the nucleus. It catalyses the reaction L-seryl-[protein] + ATP = O-phospho-L-seryl-[protein] + ADP + H(+). The catalysed reaction is L-threonyl-[protein] + ATP = O-phospho-L-threonyl-[protein] + ADP + H(+). Its function is as follows. Interacts with cdc14 which is thought to play a role in the initiation and completion of mitosis. Involved in the positive regulation of mis12. This is Protein kinase gsk3 (gsk3) from Schizosaccharomyces pombe (strain 972 / ATCC 24843) (Fission yeast).